The sequence spans 197 residues: Imidazoleglycerol-phosphate dehydratase (197 aa).

This sequence belongs to the imidazoleglycerol-phosphate dehydratase family.

The protein resides in the cytoplasm. The enzyme catalyses D-erythro-1-(imidazol-4-yl)glycerol 3-phosphate = 3-(imidazol-4-yl)-2-oxopropyl phosphate + H2O. It participates in amino-acid biosynthesis; L-histidine biosynthesis; L-histidine from 5-phospho-alpha-D-ribose 1-diphosphate: step 6/9. This is Imidazoleglycerol-phosphate dehydratase from Bradyrhizobium diazoefficiens (strain JCM 10833 / BCRC 13528 / IAM 13628 / NBRC 14792 / USDA 110).